The following is a 595-amino-acid chain: Sorting nexin-9 (595 aa).

The 62-residue stretch at 1-62 (MATKARVMYD…PTDYVEILPN (62 aa)) folds into the SH3 domain. The span at 89-100 (QTNSSSANSNNQ) shows a compositional bias: low complexity. The disordered stretch occupies residues 89–199 (QTNSSSANSN…QRGNSRAGAS (111 aa)). Phosphoserine is present on serine 121. Residues 129–144 (TDGTSAQRNSSANNWD) show a composition bias toward polar residues. The span at 159-169 (GDDDEWDEDWD) shows a compositional bias: acidic residues. Phosphoserine is present on serine 200. Residues 201–213 (MKLPLNKFPGFAK) are critical for tubulation activity. Tyrosine 239 is subject to Phosphotyrosine. One can recognise a PX domain in the interval 250 to 360 (FDCVVADPRK…QQFLNFRDEK (111 aa)). Residues arginine 286, lysine 288, and arginine 327 each contribute to the a 1,2-diacyl-sn-glycero-3-phospho-(1D-myo-inositol-4,5-bisphosphate) site. Lysine 288 carries the N6-acetyllysine modification. Residues 392-595 (LIEIEQKCDA…RQALSRFPVM (204 aa)) enclose the BAR domain.

It belongs to the sorting nexin family. In terms of assembly, homodimer, and homooligomer. Heterodimer with SNX18. Interacts with ITCH. Interacts (via SH3 domain) with TNK2, WASL and ACTR3. Identified in a complex with TNK2 and clathrin heavy chains. Identified in a complex with the AP-2 complex, clathrin and DNM2. Interacts (via SH3 domain) with DNM1 and DNM2. Identified in an oligomeric complex containing DNM1 and SNX9. Interacts with FCHSD1. Interacts with ADAM9 and ADAM15 cytoplasmic tails. Post-translationally, phosphorylated on tyrosine residues by TNK2. Phosphorylation promotes its activity in the degradation of EGFR. In terms of processing, ubiquitinated by ITCH. In terms of tissue distribution, detected in inner ear vestibula and in the cuticular plate of cochlear hair cells (at protein level).

Its subcellular location is the cytoplasmic vesicle membrane. It localises to the cell membrane. The protein resides in the cytoplasmic vesicle. It is found in the clathrin-coated vesicle. The protein localises to the golgi apparatus. Its subcellular location is the trans-Golgi network. It localises to the cell projection. The protein resides in the ruffle. It is found in the cytoplasm. Involved in endocytosis and intracellular vesicle trafficking, both during interphase and at the end of mitosis. Required for efficient progress through mitosis and cytokinesis. Required for normal formation of the cleavage furrow at the end of mitosis. Plays a role in endocytosis via clathrin-coated pits, but also clathrin-independent, actin-dependent fluid-phase endocytosis. Plays a role in macropinocytosis. Promotes internalization of TNFR. Promotes degradation of EGFR after EGF signaling. Stimulates the GTPase activity of DNM1. Promotes DNM1 oligomerization. Promotes activation of the Arp2/3 complex by WASL, and thereby plays a role in the reorganization of the F-actin cytoskeleton. Binds to membranes enriched in phosphatidylinositol 4,5-bisphosphate and promotes membrane tubulation. Has lower affinity for membranes enriched in phosphatidylinositol 3-phosphate. This is Sorting nexin-9 (Snx9) from Mus musculus (Mouse).